A 52-amino-acid polypeptide reads, in one-letter code: uncharacterized protein (52 aa).

Positions 24-52 (LRENPSKNVRTIPDAGDENSSFGHARVIA) are disordered.

This is an uncharacterized protein from Treponema pallidum (strain Nichols).